Reading from the N-terminus, the 110-residue chain is Phosphoribosyl-ATP pyrophosphatase (110 aa).

The protein belongs to the PRA-PH family.

The protein localises to the cytoplasm. It carries out the reaction 1-(5-phospho-beta-D-ribosyl)-ATP + H2O = 1-(5-phospho-beta-D-ribosyl)-5'-AMP + diphosphate + H(+). It functions in the pathway amino-acid biosynthesis; L-histidine biosynthesis; L-histidine from 5-phospho-alpha-D-ribose 1-diphosphate: step 2/9. This is Phosphoribosyl-ATP pyrophosphatase from Stutzerimonas stutzeri (strain A1501) (Pseudomonas stutzeri).